Here is a 119-residue protein sequence, read N- to C-terminus: Immunoglobulin heavy variable 2-70D (119 aa).

A signal peptide spans 1-19 (MDILCSTLLLLTVPSWVLS). A Pyrrolidone carboxylic acid modification is found at glutamine 20. Positions 20-44 (QVTLKESGPALVKPTQTLTLTCTFS) are framework-1. The Ig-like domain maps to 20-119 (QVTLKESGPA…DTATYYCARI (100 aa)). A disulfide bond links cysteine 41 and cysteine 116. The tract at residues 45 to 54 (GFSLSTSGMR) is complementarity-determining-1. Residues 55 to 71 (VSWIRQPPGKALEWLAR) are framework-2. The tract at residues 72–78 (IDWDDDK) is complementarity-determining-2. Residues 79-116 (FYSTSLKTRLTISKDTSKNQVVLTMTNMDPVDTATYYC) form a framework-3 region. The segment at 117-119 (ARI) is complementarity-determining-3.

In terms of assembly, immunoglobulins are composed of two identical heavy chains and two identical light chains; disulfide-linked.

It localises to the secreted. The protein resides in the cell membrane. In terms of biological role, v region of the variable domain of immunoglobulin heavy chains that participates in the antigen recognition. Immunoglobulins, also known as antibodies, are membrane-bound or secreted glycoproteins produced by B lymphocytes. In the recognition phase of humoral immunity, the membrane-bound immunoglobulins serve as receptors which, upon binding of a specific antigen, trigger the clonal expansion and differentiation of B lymphocytes into immunoglobulins-secreting plasma cells. Secreted immunoglobulins mediate the effector phase of humoral immunity, which results in the elimination of bound antigens. The antigen binding site is formed by the variable domain of one heavy chain, together with that of its associated light chain. Thus, each immunoglobulin has two antigen binding sites with remarkable affinity for a particular antigen. The variable domains are assembled by a process called V-(D)-J rearrangement and can then be subjected to somatic hypermutations which, after exposure to antigen and selection, allow affinity maturation for a particular antigen. The sequence is that of Immunoglobulin heavy variable 2-70D from Homo sapiens (Human).